Here is a 320-residue protein sequence, read N- to C-terminus: Lipoyl synthase (320 aa).

C67, C72, C78, C93, C97, C100, and S307 together coordinate [4Fe-4S] cluster. The Radical SAM core domain occupies 79–296; it reads FNHGTATFMI…RTKAEVMGFE (218 aa).

Belongs to the radical SAM superfamily. Lipoyl synthase family. [4Fe-4S] cluster serves as cofactor.

Its subcellular location is the cytoplasm. It carries out the reaction [[Fe-S] cluster scaffold protein carrying a second [4Fe-4S](2+) cluster] + N(6)-octanoyl-L-lysyl-[protein] + 2 oxidized [2Fe-2S]-[ferredoxin] + 2 S-adenosyl-L-methionine + 4 H(+) = [[Fe-S] cluster scaffold protein] + N(6)-[(R)-dihydrolipoyl]-L-lysyl-[protein] + 4 Fe(3+) + 2 hydrogen sulfide + 2 5'-deoxyadenosine + 2 L-methionine + 2 reduced [2Fe-2S]-[ferredoxin]. It participates in protein modification; protein lipoylation via endogenous pathway; protein N(6)-(lipoyl)lysine from octanoyl-[acyl-carrier-protein]: step 2/2. Catalyzes the radical-mediated insertion of two sulfur atoms into the C-6 and C-8 positions of the octanoyl moiety bound to the lipoyl domains of lipoate-dependent enzymes, thereby converting the octanoylated domains into lipoylated derivatives. The polypeptide is Lipoyl synthase (Mannheimia succiniciproducens (strain KCTC 0769BP / MBEL55E)).